The chain runs to 294 residues: tRNA dimethylallyltransferase (294 aa).

Residue 10 to 17 (GPTAVGKT) coordinates ATP. Residue 12–17 (TAVGKT) participates in substrate binding. The tract at residues 35-38 (DSQQ) is interaction with substrate tRNA.

The protein belongs to the IPP transferase family. Monomer. Mg(2+) serves as cofactor.

It catalyses the reaction adenosine(37) in tRNA + dimethylallyl diphosphate = N(6)-dimethylallyladenosine(37) in tRNA + diphosphate. Catalyzes the transfer of a dimethylallyl group onto the adenine at position 37 in tRNAs that read codons beginning with uridine, leading to the formation of N6-(dimethylallyl)adenosine (i(6)A). This chain is tRNA dimethylallyltransferase, found in Streptococcus suis (strain 05ZYH33).